We begin with the raw amino-acid sequence, 135 residues long: Meiotically up-regulated gene 116 protein (135 aa).

The helical transmembrane segment at 20–39 threads the bilayer; the sequence is YFHSFHCFFLLCFTVMLCVV. The interval 81–101 is disordered; the sequence is QTPTKKGNKTKKKRKKEKKKE. The span at 86–98 shows a compositional bias: basic residues; the sequence is KGNKTKKKRKKEK.

The protein localises to the mitochondrion membrane. Has a role in meiosis. The sequence is that of Meiotically up-regulated gene 116 protein (mug116) from Schizosaccharomyces pombe (strain 972 / ATCC 24843) (Fission yeast).